Reading from the N-terminus, the 255-residue chain is Ribosomal RNA small subunit methyltransferase A (255 aa).

S-adenosyl-L-methionine-binding residues include His-12, Leu-14, Gly-39, Glu-60, Asp-81, and Asn-103.

It belongs to the class I-like SAM-binding methyltransferase superfamily. rRNA adenine N(6)-methyltransferase family. RsmA subfamily.

The protein localises to the cytoplasm. It carries out the reaction adenosine(1518)/adenosine(1519) in 16S rRNA + 4 S-adenosyl-L-methionine = N(6)-dimethyladenosine(1518)/N(6)-dimethyladenosine(1519) in 16S rRNA + 4 S-adenosyl-L-homocysteine + 4 H(+). Functionally, specifically dimethylates two adjacent adenosines (A1518 and A1519) in the loop of a conserved hairpin near the 3'-end of 16S rRNA in the 30S particle. May play a critical role in biogenesis of 30S subunits. This Variovorax paradoxus (strain S110) protein is Ribosomal RNA small subunit methyltransferase A.